A 74-amino-acid polypeptide reads, in one-letter code: MKFQYLLAVFLIVLVVTDHCQAFFSLLPSLIGGLVSAIKGRRRRQLEARFEPKQRNFRKRELDFEKLFANMPDY.

An N-terminal signal peptide occupies residues methionine 1–alanine 22. Position 39 is a lysine amide; partial (lysine 39). Positions glutamine 45–tyrosine 74 are excised as a propeptide.

Belongs to the non-disulfide-bridged peptide (NDBP) superfamily. Short antimicrobial peptide (group 4) family. As to expression, expressed by the venom gland.

The protein resides in the secreted. It is found in the target cell membrane. Has potent antibacterial activity against Gram-positive bacteria M.luteus, B.thuringiensis, S.aureus and B.subtilis, but not Gram-negative bacteria. Shows a weak cytotoxicity effect against mammalian cell lines and relatively low hemolytic activity against human erythrocytes. This chain is Imcroporin, found in Isometrus maculatus (Lesser brown scorpion).